Consider the following 182-residue polypeptide: ADP-ribosylation factor-like protein 3 (182 aa).

A lipid anchor (N-myristoyl glycine) is attached at glycine 2. The residue at position 5 (serine 5) is a Phosphoserine. Residues 24-31, threonine 48, 67-71, glycine 70, 126-129, and 159-161 contribute to the GTP site; these read GLDNAGKT, DIGGQ, NKQD, and SAL. Residues threonine 31 and threonine 48 each contribute to the Mg(2+) site.

The protein belongs to the small GTPase superfamily. Arf family. In terms of assembly, found in a complex with ARL3, RP2 and UNC119 (or UNC119B); RP2 induces hydrolysis of GTP ARL3 in the complex, leading to the release of UNC119 (or UNC119B). Interacts with RP2; interaction is direct and stimulated with the activated GTP-bound form of ARL3. Interacts with SYS1. Interacts with ARL2BP; the GTP-bound form interacts with ARL2BP. Microtubule-associated protein. Does not interact with TBCC. Interacts with RP2. Interacts with PDE6D; the interaction occurs specifically with the GTP-bound form of ARL3. Interacts with GGA1; the interaction recruits PKD1:PKD2 complex to trans-Golgi network and is required for ciliary targeting of PKD1:PKD2 complex. Interacts with DNAAF9.

The protein resides in the golgi apparatus membrane. The protein localises to the cytoplasm. It localises to the cytoskeleton. Its subcellular location is the spindle. It is found in the nucleus. The protein resides in the microtubule organizing center. The protein localises to the centrosome. It localises to the cell projection. Its subcellular location is the cilium. In terms of biological role, small GTP-binding protein which cycles between an inactive GDP-bound and an active GTP-bound form, and the rate of cycling is regulated by guanine nucleotide exchange factors (GEF) and GTPase-activating proteins (GAP). Required for normal cytokinesis and cilia signaling. Required for targeting proteins to the cilium, including myristoylated NPHP3 and prenylated INPP5E. Targets NPHP3 to the ciliary membrane by releasing myristoylated NPHP3 from UNC119B cargo adapter into the cilium. Requires assistance from GTPase-activating proteins (GAPs) like RP2 and PDE6D, in order to cycle between inactive GDP-bound and active GTP-bound forms. Required for PKD1:PKD2 complex targeting from the trans-Golgi network to the cilium. The chain is ADP-ribosylation factor-like protein 3 from Mus musculus (Mouse).